Consider the following 168-residue polypeptide: Type-2 ice-structuring protein (168 aa).

An N-terminal signal peptide occupies residues Met1 to Ala17. Positions Asp18–Ser34 are excised as a propeptide. Cystine bridges form between Cys45-Cys56, Cys73-Cys163, Cys107-Cys138, Cys127-Cys149, and Cys139-Cys155. A C-type lectin domain is found at His52 to Ala164.

Its subcellular location is the secreted. Has antifreeze activity to protect fish blood from freezing at subzero sea water temperatures. Binds to ice crystals and inhibits their growth. The thermal hysteresis (TH) activity, the ability to lower the blood freezing point, is approximately 0.45 degrees Celsius at 0.15 mM for this protein. This is Type-2 ice-structuring protein from Brachyopsis segaliensis (Sea poacher).